The primary structure comprises 165 residues: uncharacterized protein (165 aa).

Positions 68 to 107 (LEGAPEWAAPHPEEQRRSPPACSQHTPPLPSTPTGPPPCS) are disordered. Pro residues predominate over residues 94–107 (PPLPSTPTGPPPCS).

This is an uncharacterized protein from Homo sapiens (Human).